The chain runs to 621 residues: MDSHTLIQALIYLGAAALIVPVAVRLGLGSVLGYLIAGCIIGPWGFRLVTDAESILHFAEIGVVLMLFVIGLELDPRRLWKLRASVFGGGALQMIACGALLGGFCILLGMDWKVAELIGMTLALSSTAIAMQAMNERNLTVSQMGRSTFSVLLFQDIAAIPLVAMIPLLAVSGSSTTLGAFALSALKVAGALALVILLGRYVTRPLLRFVARSGLREVFSAVALFLVFGFGLLLEEAGLSMAMGAFLAGVLLASSEYRHALESDIEPFKGLLLGLFFIGVGMSVDFGTLVTHPLRILILLVGFLVIKMGMLWLIARPLNVPNRQRRWFAVLLGQGSEFAFVVFGAAQMANVLDPEWAKALTLAVALSMAVTPILLVLLTRLEQSGSEQDREADEIDEEQPRVIIAGFGRFGQISGRLLLSSGVKMVILDHDPDHIETLRKFGMKVFYGDATRVDLLESAGAAKAEVLINAIDDPLTNLQLAELAKEHFPNLKIISRARDVDHYIKLRQAGVETPERETFEGALKTGRMALEGLGLGAYEARERADLFRRFNLDMVEEMVEMADGDASSRAAAVKRTSAMLTEIINEDRNHLSLTQRHGWQGTEEGKHTGDPRDEPESKPTV.

The next 12 helical transmembrane spans lie at 4–24, 26–46, 54–74, 90–110, 114–134, 151–171, 178–198, 218–238, 270–290, 294–314, 327–347, and 359–379; these read HTLI…PVAV, LGLG…PWGF, SILH…GLEL, GALQ…LLGM, VAEL…MQAM, VLLF…LLAV, LGAF…VILL, VFSA…EEAG, GLLL…GTLV, LRIL…LWLI, WFAV…GAAQ, and ALTL…VLLT. The 120-residue stretch at 399 to 518 folds into the RCK N-terminal domain; it reads QPRVIIAGFG…AGVETPERET (120 aa). The disordered stretch occupies residues 591–621; that stretch reads LSLTQRHGWQGTEEGKHTGDPRDEPESKPTV. Residues 603-621 are compositionally biased toward basic and acidic residues; the sequence is EEGKHTGDPRDEPESKPTV.

The protein belongs to the monovalent cation:proton antiporter 2 (CPA2) transporter (TC 2.A.37) family. KefC subfamily. As to quaternary structure, homodimer. Interacts with the regulatory subunit KefF.

It localises to the cell inner membrane. Its function is as follows. Pore-forming subunit of a potassium efflux system that confers protection against electrophiles. Catalyzes K(+)/H(+) antiport. This is Glutathione-regulated potassium-efflux system protein KefC from Enterobacter sp. (strain 638).